We begin with the raw amino-acid sequence, 104 residues long: Secretoglobin family 3A member 1 (104 aa).

The first 20 residues, 1 to 20 (MKLAALLGLCVALSCSSAAA), serve as a signal peptide directing secretion.

It belongs to the secretoglobin family. UGRP subfamily. As to quaternary structure, homodimer; disulfide-linked. Highly expressed in lung and prostate. Also found in mammary gland, spleen, pancreas, testis and liver. Detected throughout the airway epithelium in lung, with highest expression in large airways. Found in lung submucosal glands where it localizes to acinar and ductile cells. Not detected in respiratory bronchioles, alveolar ducts or alveolar epithelium. In mammary gland, specifically localizes to luminal epithelial cells.

Its subcellular location is the secreted. Its function is as follows. Secreted cytokine-like protein. Inhibits cell growth in vitro. The polypeptide is Secretoglobin family 3A member 1 (SCGB3A1) (Homo sapiens (Human)).